Here is a 198-residue protein sequence, read N- to C-terminus: dITP/XTP pyrophosphatase (198 aa).

10–15 (SGSDHK) lines the substrate pocket. E43 and D72 together coordinate Mg(2+). Catalysis depends on D72, which acts as the Proton acceptor. Substrate-binding positions include S73, 154-157 (FGYD), K177, and 182-183 (HR).

It belongs to the HAM1 NTPase family. In terms of assembly, homodimer. The cofactor is Mg(2+).

It catalyses the reaction XTP + H2O = XMP + diphosphate + H(+). The enzyme catalyses dITP + H2O = dIMP + diphosphate + H(+). It carries out the reaction ITP + H2O = IMP + diphosphate + H(+). Its function is as follows. Pyrophosphatase that catalyzes the hydrolysis of nucleoside triphosphates to their monophosphate derivatives, with a high preference for the non-canonical purine nucleotides XTP (xanthosine triphosphate), dITP (deoxyinosine triphosphate) and ITP. Seems to function as a house-cleaning enzyme that removes non-canonical purine nucleotides from the nucleotide pool, thus preventing their incorporation into DNA/RNA and avoiding chromosomal lesions. This Leptospira biflexa serovar Patoc (strain Patoc 1 / Ames) protein is dITP/XTP pyrophosphatase.